We begin with the raw amino-acid sequence, 340 residues long: S-adenosylmethionine:tRNA ribosyltransferase-isomerase (340 aa).

Belongs to the QueA family. In terms of assembly, monomer.

Its subcellular location is the cytoplasm. The catalysed reaction is 7-aminomethyl-7-carbaguanosine(34) in tRNA + S-adenosyl-L-methionine = epoxyqueuosine(34) in tRNA + adenine + L-methionine + 2 H(+). It functions in the pathway tRNA modification; tRNA-queuosine biosynthesis. In terms of biological role, transfers and isomerizes the ribose moiety from AdoMet to the 7-aminomethyl group of 7-deazaguanine (preQ1-tRNA) to give epoxyqueuosine (oQ-tRNA). This chain is S-adenosylmethionine:tRNA ribosyltransferase-isomerase, found in Macrococcus caseolyticus (strain JCSC5402) (Macrococcoides caseolyticum).